The primary structure comprises 441 residues: Malate dehydrogenase [NADP], chloroplastic (441 aa).

Residues 1-58 (MALTQLNSTCSKPQLHSSSQLSFLSRTRTRTLPRHYHSTFAPLHRTQHARISCSVAPN) constitute a chloroplast transit peptide. Cys76 and Cys81 form a disulfide bridge. Residue 105 to 111 (GAAGMIS) coordinates NADP(+). Substrate is bound by residues Arg186 and Arg192. Residue Asn199 coordinates NADP(+). NAD(+) is bound at residue Gln206. 223 to 225 (VGN) is a binding site for NADP(+). Residues Asn225 and Arg256 each contribute to the substrate site. His281 functions as the Proton acceptor in the catalytic mechanism. Cysteines 417 and 429 form a disulfide.

Belongs to the LDH/MDH superfamily. MDH type 2 family. In terms of assembly, homodimer.

Its subcellular location is the plastid. It localises to the chloroplast. The enzyme catalyses (S)-malate + NADP(+) = oxaloacetate + NADPH + H(+). With respect to regulation, chloroplast NADP-MDH is activated upon illumination. In order to be enzymatically active, disulfide bridges on the protein must be reduced by thioredoxin which receives electrons from ferredoxin and the electron transport system of photosynthesis. In terms of biological role, the chloroplastic, NADP-dependent form is essential for the photosynthesis C4 cycle, which allows plants to circumvent the problem of photorespiration. In C4 plants, NADP-MDH activity acts to convert oxaloacetate to malate in chloroplasts of mesophyll cells for transport to the bundle sheath cells. This is Malate dehydrogenase [NADP], chloroplastic from Pisum sativum (Garden pea).